A 261-amino-acid polypeptide reads, in one-letter code: Beta cell expansion factor A (261 aa).

The first 21 residues, 1–21 (MNKRNWLLALSLSLAFSPCYA), serve as a signal peptide directing secretion. The tract at residues 99-261 (KTAKEARIAI…IDKDLTETSR (163 aa)) is SYLF domain.

Its subcellular location is the secreted. It is found in the host. In terms of biological role, stimulates the proliferation of insulin-producing beta cells during development in gnotobiotic zebrafish and mice. BefA is a microbiome-derived protein that traffics from the host intestinal lumen to the pancreas to act directly on pancreatic islets. In pancreas, interacts directly with host beta cells and elicits their proliferation via a mechanism of increasing membrane permeabilization. Can also permeabilize bacterial cell membranes, but does not show killing of target bacteria. This is Beta cell expansion factor A from Aeromonas veronii.